Consider the following 148-residue polypeptide: HTH-type transcriptional regulator SarZ (148 aa).

The region spanning 9–139 (SKQLCFLFYV…IINNLRNFVS (131 aa)) is the HTH marR-type domain. A DNA-binding region (H-T-H motif) is located at residues 55-78 (IKKLGERVFLDSGTLTPLLKKLEK).

This sequence belongs to the SarZ family.

The protein resides in the cytoplasm. Activates transcription of virulence factors alpha- and beta hemolysin genes (hla and hlb). Also, activates RNAIII expression, a central regulator transcribed from the agr locus. In Staphylococcus aureus (strain USA300), this protein is HTH-type transcriptional regulator SarZ (sarZ).